The following is a 507-amino-acid chain: Maturase K (507 aa).

The protein belongs to the intron maturase 2 family. MatK subfamily.

It localises to the plastid. The protein resides in the chloroplast. Usually encoded in the trnK tRNA gene intron. Probably assists in splicing its own and other chloroplast group II introns. This is Maturase K from Nymphaea alba (White water-lily).